The following is a 176-amino-acid chain: Cytochrome b (176 aa).

Transmembrane regions (helical) follow at residues 33–53, 77–98, and 113–133; these read FGSL…FLAM, WLLR…YLHV, and WNVG…GYVL. Heme b-binding residues include H83 and H97.

This sequence belongs to the cytochrome b family. The cytochrome bc1 complex contains 11 subunits: 3 respiratory subunits (MT-CYB, CYC1 and UQCRFS1), 2 core proteins (UQCRC1 and UQCRC2) and 6 low-molecular weight proteins (UQCRH/QCR6, UQCRB/QCR7, UQCRQ/QCR8, UQCR10/QCR9, UQCR11/QCR10 and a cleavage product of UQCRFS1). This cytochrome bc1 complex then forms a dimer. Requires heme b as cofactor.

The protein localises to the mitochondrion inner membrane. In terms of biological role, component of the ubiquinol-cytochrome c reductase complex (complex III or cytochrome b-c1 complex) that is part of the mitochondrial respiratory chain. The b-c1 complex mediates electron transfer from ubiquinol to cytochrome c. Contributes to the generation of a proton gradient across the mitochondrial membrane that is then used for ATP synthesis. This is Cytochrome b (MT-CYB) from Tadarida brasiliensis (Brazilian free-tailed bat).